Consider the following 184-residue polypeptide: Photosystem I assembly protein Ycf4 (184 aa).

2 consecutive transmembrane segments (helical) span residues 22–42 (FCWAVILFLGSLGFLLVGTSS) and 57–77 (IVFFPQGIVMSFYGIAGLFIS).

The protein belongs to the Ycf4 family.

The protein resides in the plastid. The protein localises to the chloroplast thylakoid membrane. In terms of biological role, seems to be required for the assembly of the photosystem I complex. The polypeptide is Photosystem I assembly protein Ycf4 (Lactuca sativa (Garden lettuce)).